The following is an 84-amino-acid chain: RNA-binding protein Hfq (84 aa).

Positions 11–71 (DTFLNHVRKN…ISTIMPGHPV (61 aa)) constitute a Sm domain.

Belongs to the Hfq family. In terms of assembly, homohexamer.

In terms of biological role, RNA chaperone that binds small regulatory RNA (sRNAs) and mRNAs to facilitate mRNA translational regulation in response to envelope stress, environmental stress and changes in metabolite concentrations. Also binds with high specificity to tRNAs. This Methylobacterium nodulans (strain LMG 21967 / CNCM I-2342 / ORS 2060) protein is RNA-binding protein Hfq.